A 616-amino-acid polypeptide reads, in one-letter code: Dihydroxy-acid dehydratase (616 aa).

Asp81 serves as a coordination point for Mg(2+). Cys122 contributes to the [2Fe-2S] cluster binding site. Mg(2+) is bound by residues Asp123 and Lys124. Lys124 carries the N6-carboxylysine modification. Cys195 lines the [2Fe-2S] cluster pocket. A Mg(2+)-binding site is contributed by Glu491. Ser517 serves as the catalytic Proton acceptor.

This sequence belongs to the IlvD/Edd family. In terms of assembly, homodimer. [2Fe-2S] cluster serves as cofactor. Requires Mg(2+) as cofactor.

The catalysed reaction is (2R)-2,3-dihydroxy-3-methylbutanoate = 3-methyl-2-oxobutanoate + H2O. It carries out the reaction (2R,3R)-2,3-dihydroxy-3-methylpentanoate = (S)-3-methyl-2-oxopentanoate + H2O. Its pathway is amino-acid biosynthesis; L-isoleucine biosynthesis; L-isoleucine from 2-oxobutanoate: step 3/4. The protein operates within amino-acid biosynthesis; L-valine biosynthesis; L-valine from pyruvate: step 3/4. Functions in the biosynthesis of branched-chain amino acids. Catalyzes the dehydration of (2R,3R)-2,3-dihydroxy-3-methylpentanoate (2,3-dihydroxy-3-methylvalerate) into 2-oxo-3-methylpentanoate (2-oxo-3-methylvalerate) and of (2R)-2,3-dihydroxy-3-methylbutanoate (2,3-dihydroxyisovalerate) into 2-oxo-3-methylbutanoate (2-oxoisovalerate), the penultimate precursor to L-isoleucine and L-valine, respectively. This chain is Dihydroxy-acid dehydratase, found in Shigella sonnei (strain Ss046).